Consider the following 120-residue polypeptide: DNA-binding protein HQ_1105A (120 aa).

The segment at 1–55 (MSETPDDLDELRQQRMEELRDQADGQQSQTSDNTAAAQEAAREKAEAQQEALLKQ) is disordered. The segment covering 10–23 (ELRQQRMEELRDQA) has biased composition (basic and acidic residues). Over residues 24–34 (DGQQSQTSDNT) the composition is skewed to polar residues.

The protein belongs to the PDCD5 family.

The protein is DNA-binding protein HQ_1105A of Haloquadratum walsbyi (strain DSM 16790 / HBSQ001).